Here is a 678-residue protein sequence, read N- to C-terminus: ATP-dependent RNA helicase DHX58 (678 aa).

A Helicase ATP-binding domain is found at 11 to 188; it reads ILPALEGKNI…QGAIDHILQL (178 aa). An ATP-binding site is contributed by 24–31; sequence LPTGAGKT. The short motif at 131-134 is the DECH box element; that stretch reads DECH. Residues 353–514 form the Helicase C-terminal domain; that stretch reads MLERILLKQF…KAVAAVQKMD (162 aa). Positions 489–546 form a coiled coil; the sequence is EMKRELTNEALEVLMEKAVAAVQKMDPDEFKAKIRDLQQASLVKRAARAAHREIQQGQ. In terms of domain architecture, RLR CTR spans 542-669; it reads IQQGQFLPEH…PVFDILQDCT (128 aa). Zn(2+)-binding residues include Cys556, Cys559, Cys612, and Cys615. Residues 572-655 are RNA-binding; the sequence is VEGTHHVNVN…KIQAKKWSRV (84 aa).

The protein belongs to the helicase family. RLR subfamily. Monomer in the absence of dsRNA. Homodimer in the presence of dsRNA. Interacts with RIGI (via CARD domain), MAVS/IPS1 and DDX60. Found in a complex with RIGI and IFIH1/MDA5. Interacts with ANKRD17. Directly interacts with ATG5 and ATG12, either as ATG5 and ATG12 monomers or as ATG12-ATG5 conjugates. As to expression, highly expressed in mammary tissues. Expressed in liver and testis. Expressed at lower level in spleen, embryo, mammary gland and breast tumors.

It localises to the cytoplasm. It catalyses the reaction ATP + H2O = ADP + phosphate + H(+). In terms of biological role, acts as a regulator of RIGI and IFIH1/MDA5 mediated antiviral signaling. Cannot initiate antiviral signaling as it lacks the CARD domain required for activating MAVS/IPS1-dependent signaling events. Can have both negative and positive regulatory functions related to RIGI and IFIH1/MDA5 signaling and this role in regulating signaling may be complex and could probably depend on characteristics of the infecting virus or target cells, or both. Its inhibitory action on RIG-I signaling may involve the following mechanisms: competition with RIGI for binding to the viral RNA, binding to RIGI and inhibiting its dimerization and interaction with MAVS/IPS1, competing with IKBKE in its binding to MAVS/IPS1 thereby inhibiting activation of interferon regulatory factor 3 (IRF3). Its positive regulatory role may involve unwinding or stripping nucleoproteins of viral RNA thereby facilitating their recognition by RIGI and IFIH1/MDA5. Involved in the innate immune response to various RNA viruses and some DNA viruses such as poxviruses, and also to the bacterial pathogen Listeria monocytogenes. Can bind both ssRNA and dsRNA, with a higher affinity for dsRNA. Shows a preference to 5'-triphosphorylated RNA, although it can recognize RNA lacking a 5'-triphosphate. The chain is ATP-dependent RNA helicase DHX58 from Mus musculus (Mouse).